The sequence spans 417 residues: MRGILILVALGAATIPQASAAPNDRQQSMIDLPLKLYQNGFNTDLVTIGTPAQATRLFVDWTWIGAYTVSTKCNHTNNAYGCLAPGQKLFNETQSTSLVNQTNLYPTRTWNPNHFFMDKDLTAVFASDIYRVGDRESRLTLQLSQLNWKASFPYPFSGIFGMSPVFKSDNMSIQAPFHQMVQQKKFHSGLTSFIYCYSDEPGYKSPSKERCNGNDGIQTLGGYHHRDIGWRGIEWINTIVFPIVNDIDFIYNPAFYNYWSIPVTKHFIGNEEQALNTTTGSAVVFDHASYGRGAAMSVASYRRLVSITNAQPVNLTMATLPNNGKQKFYSVDCDRVDSFPAVKYQFGKWRRVWSIEARHYISKAKTMDGKDVCVLNVRVIGQGENFVIGNLGENFAKDKVILFDFEKNRVGLADFRD.

Residues 1 to 20 (MRGILILVALGAATIPQASA) form the signal peptide. The Peptidase A1 domain maps to 42–413 (NTDLVTIGTP…DFEKNRVGLA (372 aa)). N-linked (GlcNAc...) asparagine glycans are attached at residues Asn74, Asn91, Asn100, Asn170, Asn276, and Asn314. The cysteines at positions 333 and 373 are disulfide-linked.

It belongs to the peptidase A1 family.

The protein resides in the secreted. Its function is as follows. Probable secreted aspartic protease that supplies the fungus with nutrient amino acids. May be able to degrade the selected host's proteins involved in the immune defense. The protein is Probable secreted aspartic protease ARB_07536 of Arthroderma benhamiae (strain ATCC MYA-4681 / CBS 112371) (Trichophyton mentagrophytes).